The following is a 635-amino-acid chain: 1-deoxy-D-xylulose-5-phosphate synthase (635 aa).

Residues histidine 77 and 118–120 (GHA) each bind thiamine diphosphate. Aspartate 150 provides a ligand contact to Mg(2+). Thiamine diphosphate-binding positions include 151-152 (AS), asparagine 179, tyrosine 290, and glutamate 372. Residue asparagine 179 coordinates Mg(2+).

This sequence belongs to the transketolase family. DXPS subfamily. Homodimer. It depends on Mg(2+) as a cofactor. Requires thiamine diphosphate as cofactor.

The enzyme catalyses D-glyceraldehyde 3-phosphate + pyruvate + H(+) = 1-deoxy-D-xylulose 5-phosphate + CO2. It functions in the pathway metabolic intermediate biosynthesis; 1-deoxy-D-xylulose 5-phosphate biosynthesis; 1-deoxy-D-xylulose 5-phosphate from D-glyceraldehyde 3-phosphate and pyruvate: step 1/1. Functionally, catalyzes the acyloin condensation reaction between C atoms 2 and 3 of pyruvate and glyceraldehyde 3-phosphate to yield 1-deoxy-D-xylulose-5-phosphate (DXP). This Leptospira borgpetersenii serovar Hardjo-bovis (strain JB197) protein is 1-deoxy-D-xylulose-5-phosphate synthase.